A 105-amino-acid chain; its full sequence is Small ribosomal subunit protein uS10 (105 aa).

This sequence belongs to the universal ribosomal protein uS10 family. As to quaternary structure, part of the 30S ribosomal subunit.

In terms of biological role, involved in the binding of tRNA to the ribosomes. This Aster yellows witches'-broom phytoplasma (strain AYWB) protein is Small ribosomal subunit protein uS10.